Reading from the N-terminus, the 472-residue chain is tRNA-2-methylthio-N(6)-dimethylallyladenosine synthase (472 aa).

One can recognise an MTTase N-terminal domain in the interval 22–138; the sequence is RSYWITTFGC…LETLLQQVDS (117 aa). [4Fe-4S] cluster is bound by residues Cys-31, Cys-67, Cys-101, Cys-173, Cys-177, and Cys-180. One can recognise a Radical SAM core domain in the interval 159–396; it reads RDSAICGWVN…NALVERNARE (238 aa). The TRAM domain maps to 399 to 467; the sequence is IRYQGRTEEV…SFSLSGTPLP (69 aa).

This sequence belongs to the methylthiotransferase family. MiaB subfamily. As to quaternary structure, monomer. [4Fe-4S] cluster is required as a cofactor.

The protein resides in the cytoplasm. The catalysed reaction is N(6)-dimethylallyladenosine(37) in tRNA + (sulfur carrier)-SH + AH2 + 2 S-adenosyl-L-methionine = 2-methylsulfanyl-N(6)-dimethylallyladenosine(37) in tRNA + (sulfur carrier)-H + 5'-deoxyadenosine + L-methionine + A + S-adenosyl-L-homocysteine + 2 H(+). Functionally, catalyzes the methylthiolation of N6-(dimethylallyl)adenosine (i(6)A), leading to the formation of 2-methylthio-N6-(dimethylallyl)adenosine (ms(2)i(6)A) at position 37 in tRNAs that read codons beginning with uridine. This is tRNA-2-methylthio-N(6)-dimethylallyladenosine synthase from Synechococcus sp. (strain CC9902).